Reading from the N-terminus, the 192-residue chain is Xanthine phosphoribosyltransferase (192 aa).

Residues Leu20 and Asn27 each coordinate xanthine. A 5-phospho-alpha-D-ribose 1-diphosphate-binding site is contributed by Ala128–Ala132. Xanthine is bound at residue Lys156.

Belongs to the purine/pyrimidine phosphoribosyltransferase family. Xpt subfamily. As to quaternary structure, homodimer.

It is found in the cytoplasm. The enzyme catalyses XMP + diphosphate = xanthine + 5-phospho-alpha-D-ribose 1-diphosphate. Its pathway is purine metabolism; XMP biosynthesis via salvage pathway; XMP from xanthine: step 1/1. Converts the preformed base xanthine, a product of nucleic acid breakdown, to xanthosine 5'-monophosphate (XMP), so it can be reused for RNA or DNA synthesis. This chain is Xanthine phosphoribosyltransferase, found in Staphylococcus aureus (strain JH1).